A 291-amino-acid chain; its full sequence is Small ribosomal subunit protein uS2 (291 aa).

Residues 238-247 show a composition bias toward acidic residues; that stretch reads DEESGDELDE. The tract at residues 238–291 is disordered; it reads DEESGDELDESVSLHEEGREITDYENYTPPEEREYSVNDEGDVFDEDESLYEGR. Basic and acidic residues predominate over residues 249–259; it reads VSLHEEGREIT. The span at 274-291 shows a compositional bias: acidic residues; sequence VNDEGDVFDEDESLYEGR.

Belongs to the universal ribosomal protein uS2 family.

In Treponema pallidum (strain Nichols), this protein is Small ribosomal subunit protein uS2 (rpsB).